A 201-amino-acid chain; its full sequence is Superoxide dismutase [Mn] (201 aa).

Positions 27, 81, 163, and 167 each coordinate Mn(2+).

It belongs to the iron/manganese superoxide dismutase family. Homodimer. The cofactor is Mn(2+).

It carries out the reaction 2 superoxide + 2 H(+) = H2O2 + O2. Its function is as follows. Destroys superoxide anion radicals which are normally produced within the cells and which are toxic to biological systems. May play a critical role against oxidative stress, affecting both the survival and the virulence of S.pneumoniae. The protein is Superoxide dismutase [Mn] (sodA) of Streptococcus pneumoniae serotype 4 (strain ATCC BAA-334 / TIGR4).